A 75-amino-acid chain; its full sequence is Small ribosomal subunit protein eS28 (75 aa).

It belongs to the eukaryotic ribosomal protein eS28 family.

In Methanococcus aeolicus (strain ATCC BAA-1280 / DSM 17508 / OCM 812 / Nankai-3), this protein is Small ribosomal subunit protein eS28.